A 440-amino-acid chain; its full sequence is Protein TENP (440 aa).

As to expression, expressed in developing retina and brain, but not in heart, liver or kidney. In brain, located in a narrow strip in the boundary between the ventricular zone (consisting of proliferating cells) and the intermediate zone (consisting of postmitotic, differentiating cells). Expressed in all major regions of the developing brain, including the myelencephalon, the mesencephalon, the telencephalon and the diencephalon. In the developing retina, expression is scattered across the retinal neural epithelium. Expressed in egg white (at protein level). Expressed in the magnum of the oviduct (at protein level).

Its function is as follows. May play a role in the developmental transition from cell proliferation to cell differentiation during neurogenesis. The protein is Protein TENP (TENP) of Gallus gallus (Chicken).